A 378-amino-acid polypeptide reads, in one-letter code: Leukosialin (378 aa).

The N-terminal stretch at 1–7 (WAQVVSQ) is a signal peptide. The Extracellular portion of the chain corresponds to 8 to 231 (ENLPNTMTML…TVPPRPGSSG (224 aa)). O-linked (GalNAc...) threonine glycosylation is found at T13, T15, and T20. A disordered region spans residues 13–33 (TMTMLPFTPNSESPSTSEALS). O-linked (GalNAc...) serine glycans are attached at residues S23, S25, and S27. T28 carries an O-linked (GalNAc...) threonine glycan. 2 O-linked (GalNAc...) serine glycosylation sites follow: S29 and S33. An O-linked (GalNAc...) threonine glycan is attached at T34. Residues S36 and S37 are each glycosylated (O-linked (GalNAc...) serine). T40 is a glycosylation site (O-linked (GalNAc...) threonine). O-linked (GalNAc...) serine glycans are attached at residues S108 and S113. O-linked (GalNAc...) threonine glycosylation is found at T118, T120, and T124. S125 and S126 each carry an O-linked (GalNAc...) serine glycan. T174 carries an O-linked (GalNAc...) threonine glycan. O-linked (GalNAc...) serine glycosylation is found at S176 and S180. O-linked (GalNAc...) threonine glycosylation is present at T183. An O-linked (GalNAc...) serine glycan is attached at S187. Residue T189 is glycosylated (O-linked (GalNAc...) threonine). Residues 232 to 254 (MLLVSMLIALTVVLVLVALLLLW) form a helical membrane-spanning segment. The interval 255–285 (RQRQKRRTGALTLSRGGKRNGTVDAWAGPAR) is required for interaction with EZR, MSN and RDX and for co-localization to microvilli. Topologically, residues 255–378 (RQRQKRRTGA…AKDGAAPQSL (124 aa)) are cytoplasmic. Positions 259–273 (KRRTGALTLSRGGKR) match the Nuclear localization signal motif. The disordered stretch occupies residues 265-378 (LTLSRGGKRN…AKDGAAPQSL (114 aa)). The residue at position 268 (S268) is a Phosphoserine. A Phosphothreonine modification is found at T276. Residues 310–321 (GSGQRPTLTTFF) are compositionally biased toward polar residues. A Phosphoserine modification is found at S311. Position 316 is a phosphothreonine (T316). 2 positions are modified to phosphoserine: S322 and S326. S330 bears the Phosphoserine; by PKC/PRKCQ mark. A Phosphoserine modification is found at S354. T361 carries the phosphothreonine modification.

Interacts with SIGLEC1. As to quaternary structure, monomer. Interacts with CTNNB1. Interacts with EZR, MSN and RDX (via FERM domain). In terms of processing, has a high content of sialic acid and O-linked carbohydrate structures. Phosphorylation at Ser-330 is regulated by chemokines, requires its association with ERM proteins (EZR, RDX and MSN) and is essential for its function in the regulation of T-cell trafficking to lymph nodes. Post-translationally, cleavage by CTSG releases its extracellular domain and triggers its intramembrane proteolysis by gamma-secretase releasing the CD43 cytoplasmic tail chain (CD43-ct) which translocates to the nucleus. In terms of processing, sumoylated. As to expression, cell surface of thymocytes, T-lymphocytes, neutrophils, plasma cells and myelomas.

Its subcellular location is the membrane. The protein localises to the cell projection. The protein resides in the microvillus. It is found in the uropodium. It localises to the nucleus. Its subcellular location is the PML body. In terms of biological role, predominant cell surface sialoprotein of leukocytes which regulates multiple T-cell functions, including T-cell activation, proliferation, differentiation, trafficking and migration. Positively regulates T-cell trafficking to lymph-nodes via its association with ERM proteins (EZR, RDX and MSN). Negatively regulates Th2 cell differentiation and predisposes the differentiation of T-cells towards a Th1 lineage commitment. Promotes the expression of IFN-gamma by T-cells during T-cell receptor (TCR) activation of naive cells and induces the expression of IFN-gamma by CD4(+) T-cells and to a lesser extent by CD8(+) T-cells. Plays a role in preparing T-cells for cytokine sensing and differentiation into effector cells by inducing the expression of cytokine receptors IFNGR and IL4R, promoting IFNGR and IL4R signaling and by mediating the clustering of IFNGR with TCR. Acts as a major E-selectin ligand responsible for Th17 cell rolling on activated vasculature and recruitment during inflammation. Mediates Th17 cells, but not Th1 cells, adhesion to E-selectin. Acts as a T-cell counter-receptor for SIGLEC1. Protects cells from apoptotic signals, promoting cell survival. This is Leukosialin (Spn) from Rattus norvegicus (Rat).